The primary structure comprises 360 residues: Peptide chain release factor 1 (360 aa).

The residue at position 235 (Q235) is an N5-methylglutamine.

The protein belongs to the prokaryotic/mitochondrial release factor family. In terms of processing, methylated by PrmC. Methylation increases the termination efficiency of RF1.

It is found in the cytoplasm. Peptide chain release factor 1 directs the termination of translation in response to the peptide chain termination codons UAG and UAA. The polypeptide is Peptide chain release factor 1 (Bordetella pertussis (strain Tohama I / ATCC BAA-589 / NCTC 13251)).